The following is a 326-amino-acid chain: Eukaryotic translation initiation factor 3 subunit I (326 aa).

WD repeat units lie at residues 8-47 (GHER…RLGT), 50-89 (GHQG…VIAS), 145-184 (MTES…KVVD), 188-227 (DHSA…CLKT), and 285-326 (GHFG…NIFE).

The protein belongs to the eIF-3 subunit I family. As to quaternary structure, component of the eukaryotic translation initiation factor 3 (eIF-3) complex. The eIF-3 complex interacts with pix.

Its subcellular location is the cytoplasm. Its function is as follows. Component of the eukaryotic translation initiation factor 3 (eIF-3) complex, which is involved in protein synthesis of a specialized repertoire of mRNAs and, together with other initiation factors, stimulates binding of mRNA and methionyl-tRNAi to the 40S ribosome. The eIF-3 complex specifically targets and initiates translation of a subset of mRNAs involved in cell proliferation. In Drosophila sechellia (Fruit fly), this protein is Eukaryotic translation initiation factor 3 subunit I.